Reading from the N-terminus, the 675-residue chain is MDYEDNLEAPVWDELNHEGDKTQSLVSNSIESIGQISTNEERKDNELLETTASFADKIDLDSAPEWKDPGLSVAGNPQLEEHDNSKADDLINSLAPEQDPIADLKNSTTQFIATRESGGALFTGNANSPLVFDDTIYDANTSPNTSKSISGRRSGKPRILFDSARAQRNSKRNHSLKAKRTTASDDTIKTPFTDPLKKAEKENEFVEEPLDDRNERRENNEGKFTASVEKNILEQVDRPLYNLPQTGANISSPAEVEENSEKFGKTKIGSKVPPTEKAVAFKVEVKDPVKVGELTSIHVEYTVISESSLLELKYAQVSRRYRDFRWLYRQLQNNHWGKVIPPPPEKQSVGSFKENFIENRRFQMESMLKKICQDPVLQKDKDFLLFLTSDDFSSESKKRAFLTGSGAINDSNDLSEVRISEIQLLGAEDAAEVLKNGGIDAESHKGFMSISFSSLPKYNEADEFFIEKKQKIDELEDNLKKLSKSLEMVDTSRNTLAASTEEFSSMVETLASLNVSEPNSELLNNFADVHKSIKSSLERSSLQETLTMGVMLDDYIRSLASVKAIFNQRSKLGYFLVVIENDMNKKHSQLGKLGQNIHSEKFREMRKEFQTLERRYNLTKKQWQAVGDKIKDEFQGFSTDKIREFRNGMEISLEAAIESQKECIELWETFYQTNL.

3 disordered regions span residues 1 to 26 (MDYE…QSLV), 65 to 84 (EWKD…EHDN), and 165 to 219 (RAQR…RREN). The span at 168–180 (RNSKRNHSLKAKR) shows a compositional bias: basic residues. Basic and acidic residues predominate over residues 195–204 (PLKKAEKENE). The region spanning 279–394 (VAFKVEVKDP…LFLTSDDFSS (116 aa)) is the PX domain. A 1,2-diacyl-sn-glycero-3-phospho-(1D-myo-inositol-3-phosphate) contacts are provided by Arg-320, Lys-346, and Arg-360.

It belongs to the sorting nexin family. Component of the retromer complex which consists of VPS29, VPS26, VPS35, VPS5 and VPS17. Component of a retromer subcomplex consisting of VPSD5 and VPS17. Post-translationally, phosphorylated on serine residue(s).

It localises to the cytoplasm. The protein resides in the golgi apparatus membrane. Its subcellular location is the endosome membrane. Plays a role in vesicular protein sorting. Required for retention of late Golgi membrane proteins and vacuolar biogenesis. Component of the membrane-associated retromer complex which is essential in endosome-to-Golgi retrograde transport. The VPS5-VPS17 subcomplex may assemble onto the membrane to promote vesicle formation. This Saccharomyces cerevisiae (strain ATCC 204508 / S288c) (Baker's yeast) protein is Vacuolar protein sorting-associated protein 5 (VPS5).